The primary structure comprises 209 residues: Transcription factor 23 (209 aa).

Disordered stretches follow at residues 1-20 and 54-85; these read MSQE…GHNK and LSRA…ARER. The span at 72–85 shows a compositional bias: basic and acidic residues; that stretch reads GRSEASPENAARER. The bHLH domain maps to 75-127; sequence EASPENAARERTRVKTLRQAFLALQAALPAVPPDTKLSKLDVLVLATSYIAHL.

In terms of assembly, forms inactive heterodimeric complex with TCF3. Highly expressed in the uterus (predominantly in myometrium), ovary, and testis. Expression in the uterus is higher in the diestrus phase than in the estrus phase and reaches a maximum at 7.5 dpc. Expression declines towards the time of delivery and returns to the non-pregnant level 4 days after delivery. Low expression seen in lung, heart, intestine, and spleen.

It localises to the nucleus. Its function is as follows. Inhibits E-box-mediated binding and transactivation of bHLH factors. Inhibitory effect is similar to that of ID proteins. Inhibits the formation of TCF3 and MYOD1 homodimers and heterodimers. Lacks DNA binding activity. May be involved in the regulation or modulation of smooth muscle contraction of the uterus during pregnancy and particularly around the time of delivery. Seems to play a role in the inhibition of myogenesis. In Mus musculus (Mouse), this protein is Transcription factor 23 (Tcf23).